Consider the following 125-residue polypeptide: uncharacterized protein (125 aa).

This is an uncharacterized protein from Acanthamoeba polyphaga (Amoeba).